A 489-amino-acid polypeptide reads, in one-letter code: Long chain base biosynthesis protein 2d (489 aa).

A helical transmembrane segment spans residues 4–24; that stretch reads LPYVTALTTLFSYGLLFAFGQ. N6-(pyridoxal phosphate)lysine is present on K311.

Belongs to the class-II pyridoxal-phosphate-dependent aminotransferase family. In terms of assembly, heterodimer with LCB1. Component of the serine palmitoyltransferase (SPT) complex, composed of LCB1 and LCB2. Requires pyridoxal 5'-phosphate as cofactor.

It is found in the endoplasmic reticulum membrane. It catalyses the reaction L-serine + hexadecanoyl-CoA + H(+) = 3-oxosphinganine + CO2 + CoA. It participates in lipid metabolism; sphingolipid metabolism. Functionally, serine palmitoyltransferase (SPT). The heterodimer formed with LCB1 constitutes the catalytic core. This Oryza sativa subsp. japonica (Rice) protein is Long chain base biosynthesis protein 2d.